A 137-amino-acid polypeptide reads, in one-letter code: Large ribosomal subunit protein bL21 (137 aa).

The disordered stretch occupies residues 1-26; that stretch reads MADTKTATPATDAEEATATPPAAAPS.

This sequence belongs to the bacterial ribosomal protein bL21 family. In terms of assembly, part of the 50S ribosomal subunit. Contacts protein L20.

In terms of biological role, this protein binds to 23S rRNA in the presence of protein L20. This is Large ribosomal subunit protein bL21 from Parasynechococcus marenigrum (strain WH8102).